Consider the following 362-residue polypeptide: Bifunctional chorismate mutase/prephenate dehydratase (362 aa).

In terms of domain architecture, Chorismate mutase spans 1-92 (MEELKELRKE…ACLSLEKKIK (92 aa)). Residues Arg8, Arg25, Lys36, and Glu49 each coordinate substrate. The region spanning 93–267 (VAYLGPKATF…NFTRFLVIAK (175 aa)) is the Prephenate dehydratase domain. Residues 279–356 (SILFGVKDEP…QFLKVLGSYP (78 aa)) enclose the ACT domain.

The protein localises to the cytoplasm. The catalysed reaction is chorismate = prephenate. The enzyme catalyses prephenate + H(+) = 3-phenylpyruvate + CO2 + H2O. Its pathway is amino-acid biosynthesis; L-phenylalanine biosynthesis; phenylpyruvate from prephenate: step 1/1. The protein operates within metabolic intermediate biosynthesis; prephenate biosynthesis; prephenate from chorismate: step 1/1. Catalyzes the Claisen rearrangement of chorismate to prephenate and the decarboxylation/dehydration of prephenate to phenylpyruvate. The sequence is that of Bifunctional chorismate mutase/prephenate dehydratase (pheA) from Aquifex aeolicus (strain VF5).